The primary structure comprises 206 residues: Peptidyl-tRNA hydrolase (206 aa).

Tyr19 is a tRNA binding site. Catalysis depends on His24, which acts as the Proton acceptor. Residues Phe70, Asn72, and Asn118 each coordinate tRNA.

It belongs to the PTH family. In terms of assembly, monomer.

The protein localises to the cytoplasm. It catalyses the reaction an N-acyl-L-alpha-aminoacyl-tRNA + H2O = an N-acyl-L-amino acid + a tRNA + H(+). Hydrolyzes ribosome-free peptidyl-tRNAs (with 1 or more amino acids incorporated), which drop off the ribosome during protein synthesis, or as a result of ribosome stalling. In terms of biological role, catalyzes the release of premature peptidyl moieties from peptidyl-tRNA molecules trapped in stalled 50S ribosomal subunits, and thus maintains levels of free tRNAs and 50S ribosomes. The chain is Peptidyl-tRNA hydrolase from Synechococcus sp. (strain CC9902).